An 845-amino-acid polypeptide reads, in one-letter code: Protein SPA1-RELATED 3 (845 aa).

Residues 1 to 19 (MEGSSNSNSRGFNTSGVSD) show a composition bias toward polar residues. 2 disordered regions span residues 1–33 (MEGS…LTTR) and 139–158 (CSDS…KEIG). The Protein kinase domain maps to 1-297 (MEGSSNSNSR…MSDLLQSEFI (297 aa)). Residues 301 to 329 (RDNLEEREAAIELRDRIEEQESLLEFLLL) are a coiled coil. 7 WD repeats span residues 532 to 571 (NSSN…NDNR), 581 to 621 (AGRS…LVTE), 624 to 664 (EHKK…SIGT), 666 to 706 (KTKA…IPLC), 710 to 748 (GHSK…SGIN), 757 to 796 (GHTN…PVMS), and 812 to 845 (DASQ…EMMT). Residues 685 to 699 (AFGSADHKVYYYDLR) carry the DWD box motif.

As to quaternary structure, interacts with COP1 and CO.

It is found in the nucleus. Its function is as follows. Repressor of photomorphogenesis in the light. Probably part of the COP1/SPA E3 ubiquitin-protein ligase complex. This Arabidopsis thaliana (Mouse-ear cress) protein is Protein SPA1-RELATED 3 (SPA3).